A 265-amino-acid polypeptide reads, in one-letter code: 2-C-methyl-D-erythritol 4-phosphate cytidylyltransferase (265 aa).

Over residues 231-241 the composition is skewed to basic and acidic residues; that stretch reads DRGGASREAER. A disordered region spans residues 231 to 265; the sequence is DRGGASREAERSAMPSAATSVFSGARSAASGSEEV. The segment covering 253–265 has biased composition (low complexity); the sequence is SGARSAASGSEEV.

Belongs to the IspD/TarI cytidylyltransferase family. IspD subfamily.

It catalyses the reaction 2-C-methyl-D-erythritol 4-phosphate + CTP + H(+) = 4-CDP-2-C-methyl-D-erythritol + diphosphate. It participates in isoprenoid biosynthesis; isopentenyl diphosphate biosynthesis via DXP pathway; isopentenyl diphosphate from 1-deoxy-D-xylulose 5-phosphate: step 2/6. In terms of biological role, catalyzes the formation of 4-diphosphocytidyl-2-C-methyl-D-erythritol from CTP and 2-C-methyl-D-erythritol 4-phosphate (MEP). This Xanthomonas campestris pv. campestris (strain 8004) protein is 2-C-methyl-D-erythritol 4-phosphate cytidylyltransferase.